Reading from the N-terminus, the 204-residue chain is Ribonuclease HII (204 aa).

The RNase H type-2 domain maps to Met-1–Leu-197. Asp-6, Glu-7, and Asp-103 together coordinate a divalent metal cation.

The protein belongs to the RNase HII family. Requires Mn(2+) as cofactor. It depends on Mg(2+) as a cofactor.

The protein resides in the cytoplasm. It carries out the reaction Endonucleolytic cleavage to 5'-phosphomonoester.. In terms of biological role, endonuclease that specifically degrades the RNA of RNA-DNA hybrids. This is Ribonuclease HII from Helicobacter pylori (strain Shi470).